A 211-amino-acid chain; its full sequence is Probable nicotinate-nucleotide adenylyltransferase (211 aa).

The protein belongs to the NadD family.

The catalysed reaction is nicotinate beta-D-ribonucleotide + ATP + H(+) = deamido-NAD(+) + diphosphate. Its pathway is cofactor biosynthesis; NAD(+) biosynthesis; deamido-NAD(+) from nicotinate D-ribonucleotide: step 1/1. Its function is as follows. Catalyzes the reversible adenylation of nicotinate mononucleotide (NaMN) to nicotinic acid adenine dinucleotide (NaAD). The chain is Probable nicotinate-nucleotide adenylyltransferase from Legionella pneumophila (strain Corby).